The following is a 396-amino-acid chain: Elongation factor Tu (396 aa).

Residues 10 to 206 (KPHVNIGTIG…AVDEYIPTPQ (197 aa)) form the tr-type G domain. The segment at 19-26 (GHVDHGKT) is G1. 19–26 (GHVDHGKT) provides a ligand contact to GTP. Residue threonine 26 coordinates Mg(2+). Positions 60-64 (GITIS) are G2. Residues 81-84 (DCPG) are G3. Residues 81–85 (DCPGH) and 136–139 (NKVD) contribute to the GTP site. The G4 stretch occupies residues 136–139 (NKVD). Positions 174-176 (SAL) are G5.

Belongs to the TRAFAC class translation factor GTPase superfamily. Classic translation factor GTPase family. EF-Tu/EF-1A subfamily. As to quaternary structure, monomer.

The protein resides in the cytoplasm. It carries out the reaction GTP + H2O = GDP + phosphate + H(+). Its function is as follows. GTP hydrolase that promotes the GTP-dependent binding of aminoacyl-tRNA to the A-site of ribosomes during protein biosynthesis. The polypeptide is Elongation factor Tu (Stigmatella aurantiaca).